The sequence spans 89 residues: MKEMIIWPAYIDIKRTKNEGRKVPKEFAVANPKLKDIADKIKKMGLEHSIEIKKSYPMEPWEICGYIKVKLDKNTSKLQILKEISKNMK.

It belongs to the SRP19 family. Part of the signal recognition particle protein translocation system, which is composed of SRP and FtsY. Archaeal SRP consists of a 7S RNA molecule of 300 nucleotides and two protein subunits: SRP54 and SRP19.

Its subcellular location is the cytoplasm. Involved in targeting and insertion of nascent membrane proteins into the cytoplasmic membrane. Binds directly to 7S RNA and mediates binding of the 54 kDa subunit of the SRP. The protein is Signal recognition particle 19 kDa protein of Methanococcus maripaludis (strain C7 / ATCC BAA-1331).